The sequence spans 77 residues: Large ribosomal subunit protein bL31 (77 aa).

This sequence belongs to the bacterial ribosomal protein bL31 family. Type A subfamily. Part of the 50S ribosomal subunit.

Functionally, binds the 23S rRNA. This Microcystis aeruginosa (strain NIES-843 / IAM M-2473) protein is Large ribosomal subunit protein bL31.